A 285-amino-acid chain; its full sequence is Nucleotide-binding protein PSPTO_4456 (285 aa).

8 to 15 contributes to the ATP binding site; the sequence is GRSGSGKS. 60–63 provides a ligand contact to GTP; sequence DARN.

The protein belongs to the RapZ-like family.

Functionally, displays ATPase and GTPase activities. In Pseudomonas syringae pv. tomato (strain ATCC BAA-871 / DC3000), this protein is Nucleotide-binding protein PSPTO_4456.